Consider the following 370-residue polypeptide: Serine/threonine-protein kinase SAPK5 (370 aa).

The region spanning 4–260 (YEPVREIGAG…MGEIKSHPWF (257 aa)) is the Protein kinase domain. ATP is bound by residues 10 to 18 (IGAGNFGVA) and lysine 33. Aspartate 123 acts as the Proton acceptor in catalysis. The tract at residues 312-370 (EAQTVPKPDKPVSGYGWGTDDDDDDQQPAEEEDEEDDYDRTVREVHASVDLDMSNLQIS) is disordered. A compositionally biased stretch (acidic residues) spans 330 to 349 (TDDDDDDQQPAEEEDEEDDY). Over residues 350 to 360 (DRTVREVHASV) the composition is skewed to basic and acidic residues.

Belongs to the protein kinase superfamily. Ser/Thr protein kinase family. In terms of processing, may be phosphorylated. Expressed in leaf blades, leaf sheaths and roots. Expressed in shoots and roots of young seedlings.

The protein resides in the cytoplasm. It is found in the nucleus. The catalysed reaction is L-seryl-[protein] + ATP = O-phospho-L-seryl-[protein] + ADP + H(+). It catalyses the reaction L-threonyl-[protein] + ATP = O-phospho-L-threonyl-[protein] + ADP + H(+). With respect to regulation, activated by hyperosmotic stress. In terms of biological role, may play a role in signal transduction of hyperosmotic response. This chain is Serine/threonine-protein kinase SAPK5 (SAPK5), found in Oryza sativa subsp. japonica (Rice).